The primary structure comprises 222 residues: Probable pyridoxal 5'-phosphate synthase subunit SNO3 (222 aa).

58 to 60 (GES) is an L-glutamine binding site. Cysteine 91 (nucleophile) is an active-site residue. L-glutamine contacts are provided by residues arginine 120 and 151 to 152 (IR). Residues histidine 197 and glutamate 199 each act as charge relay system in the active site.

It belongs to the glutaminase PdxT/SNO family.

The catalysed reaction is aldehydo-D-ribose 5-phosphate + D-glyceraldehyde 3-phosphate + L-glutamine = pyridoxal 5'-phosphate + L-glutamate + phosphate + 3 H2O + H(+). It catalyses the reaction L-glutamine + H2O = L-glutamate + NH4(+). The protein operates within cofactor biosynthesis; pyridoxal 5'-phosphate biosynthesis. Functionally, catalyzes the hydrolysis of glutamine to glutamate and ammonia as part of the biosynthesis of pyridoxal 5'-phosphate. The resulting ammonia molecule is channeled to the active site of a SNZ isoform. The polypeptide is Probable pyridoxal 5'-phosphate synthase subunit SNO3 (SNO3) (Saccharomyces cerevisiae (strain ATCC 204508 / S288c) (Baker's yeast)).